The sequence spans 567 residues: MTDYYEPINIFRQCAISVKKRGQEHGLDVATRRVASWQRSAKLNSPTLRKVSDDYFLTKKVKSDYWQVSDMDLSATAFSSVGNLVMVTSNKDQDNVKLYTYAEDPNSMRQLQTITVPGAPITTATLLPAAEFNPTAYVPDHEQLLLTGHRDGIVNLISTSFTKGESRIVKRYNHRKHLVSMANEVMNIDTKHKDEIEQLLANHKQKSNSARAMPVRSIKPWNGMGFVSLINDSLFVFTLNNTKTPQYLNSFPGIQSFAIQTHSNPYLLGLTGTHFGANNIALLDLKKTLYIPDPVIDKEYRKSSSRSVSSDCTWISSCYLAQALGKEVNIWDVRRTDGKPKAKILPNKGVIEHLSYHYETDTLFSSDDQGNIIAWDLTNLDRLEYCGLVHGLDAVKYNMNLPINDSNYSQCGNVVVNGNNNSACTYRKLARKIEVNQRAGTLFSYCDHELGLHRLFSAPVEISLQLSDTETINYESEEEEVMVHVDKLHDNSHENSSILHSDSTTLHSRDFDSYSDNESANTTDNDNELAYMDTFKRPVPAFLDEKVAAYNNPVLSSSSSTLAYGYF.

WD repeat units lie at residues 68 to 109, 127 to 167, 302 to 341, 346 to 385, and 398 to 437; these read VSDM…NSMR, LPAA…GESR, KSSS…GKPK, PNKG…RLEY, and NMNL…EVNQ.

Belongs to the WD repeat DSE1 family.

Functionally, involved in cell wall metabolism and required for the separation of the mother and daughter cells. This is Protein DSE1 (DSE1) from Candida glabrata (strain ATCC 2001 / BCRC 20586 / JCM 3761 / NBRC 0622 / NRRL Y-65 / CBS 138) (Yeast).